The following is a 211-amino-acid chain: Transcriptional regulator NarO (211 aa).

An HTH bat-type domain is found at leucine 154–leucine 205.

Functionally, activates transcription of the denitrifying genes (nitrate reductase narA and nitrite reductase nirK) under anaerobic conditions. This is Transcriptional regulator NarO from Haloferax volcanii (strain ATCC 29605 / DSM 3757 / JCM 8879 / NBRC 14742 / NCIMB 2012 / VKM B-1768 / DS2) (Halobacterium volcanii).